Here is a 158-residue protein sequence, read N- to C-terminus: Protein SREK1IP1 (158 aa).

2 disordered regions span residues 1–20 (MAAP…RCGY) and 45–158 (SSTS…SDTD). A CCHC-type zinc finger spans residues 13-30 (AGCKRCGYPGHLTFECRN). Residues 59-79 (ALSKEKIFGSHSKGSQEDSRK) are compositionally biased toward basic and acidic residues. Composition is skewed to basic residues over residues 80-98 (EKHK…KKRS) and 111-140 (KKKK…KQKK). Low complexity predominate over residues 145 to 158 (SSSSDSSSESSDTD).

Its function is as follows. Possible splicing regulator involved in the control of cellular survival. In Danio rerio (Zebrafish), this protein is Protein SREK1IP1 (srek1ip1).